Here is a 631-residue protein sequence, read N- to C-terminus: tRNA uridine 5-carboxymethylaminomethyl modification enzyme MnmG (631 aa).

13-18 contacts FAD; that stretch reads GGGHAG. Residue 273–287 coordinates NAD(+); the sequence is GPRYCPSIEDKVNRF.

Belongs to the MnmG family. Homodimer. Heterotetramer of two MnmE and two MnmG subunits. It depends on FAD as a cofactor.

The protein resides in the cytoplasm. Its function is as follows. NAD-binding protein involved in the addition of a carboxymethylaminomethyl (cmnm) group at the wobble position (U34) of certain tRNAs, forming tRNA-cmnm(5)s(2)U34. The polypeptide is tRNA uridine 5-carboxymethylaminomethyl modification enzyme MnmG (Chromohalobacter salexigens (strain ATCC BAA-138 / DSM 3043 / CIP 106854 / NCIMB 13768 / 1H11)).